A 385-amino-acid polypeptide reads, in one-letter code: 1-deoxy-D-xylulose 5-phosphate reductoisomerase (385 aa).

The NADPH site is built by Thr-10, Gly-11, Ser-12, Ile-13, Lys-37, and Asn-124. Residue Lys-125 coordinates 1-deoxy-D-xylulose 5-phosphate. Glu-126 lines the NADPH pocket. Asp-150 is a Mn(2+) binding site. 1-deoxy-D-xylulose 5-phosphate contacts are provided by Ser-151, Glu-152, Ser-176, and His-199. Glu-152 is a Mn(2+) binding site. Residue Gly-205 coordinates NADPH. Positions 212, 217, 218, and 221 each coordinate 1-deoxy-D-xylulose 5-phosphate. Glu-221 contributes to the Mn(2+) binding site.

This sequence belongs to the DXR family. It depends on Mg(2+) as a cofactor. Requires Mn(2+) as cofactor.

The catalysed reaction is 2-C-methyl-D-erythritol 4-phosphate + NADP(+) = 1-deoxy-D-xylulose 5-phosphate + NADPH + H(+). The protein operates within isoprenoid biosynthesis; isopentenyl diphosphate biosynthesis via DXP pathway; isopentenyl diphosphate from 1-deoxy-D-xylulose 5-phosphate: step 1/6. Its function is as follows. Catalyzes the NADPH-dependent rearrangement and reduction of 1-deoxy-D-xylulose-5-phosphate (DXP) to 2-C-methyl-D-erythritol 4-phosphate (MEP). The chain is 1-deoxy-D-xylulose 5-phosphate reductoisomerase from Clostridium botulinum (strain Loch Maree / Type A3).